The primary structure comprises 503 residues: Maturase K (503 aa).

The protein belongs to the intron maturase 2 family. MatK subfamily.

It localises to the plastid. The protein localises to the chloroplast. Usually encoded in the trnK tRNA gene intron. Probably assists in splicing its own and other chloroplast group II introns. The protein is Maturase K of Vicia sativa (Spring vetch).